The primary structure comprises 540 residues: 2,3-bisphosphoglycerate-independent phosphoglycerate mutase (540 aa).

Residues Asp-13 and Ser-63 each coordinate Mn(2+). Ser-63 acts as the Phosphoserine intermediate in catalysis. Residues His-124, 154-155, Arg-186, Arg-192, 262-265, and Lys-356 contribute to the substrate site; these read RD and RPDR. Mn(2+)-binding residues include Asp-423, His-427, Asp-464, His-465, and His-483.

The protein belongs to the BPG-independent phosphoglycerate mutase family. In terms of assembly, monomer. The cofactor is Mn(2+).

It carries out the reaction (2R)-2-phosphoglycerate = (2R)-3-phosphoglycerate. It functions in the pathway carbohydrate degradation; glycolysis; pyruvate from D-glyceraldehyde 3-phosphate: step 3/5. Catalyzes the interconversion of 2-phosphoglycerate and 3-phosphoglycerate. The sequence is that of 2,3-bisphosphoglycerate-independent phosphoglycerate mutase from Chloroflexus aggregans (strain MD-66 / DSM 9485).